The primary structure comprises 80 residues: Peptide LaIT2 (80 aa).

The signal sequence occupies residues 1 to 21 (MAKHLIVMFLVIMVISSLVDC). Residues 49–80 (QYGCPIISNMCEDHCRRKKMEGQCDLLDCVCS) enclose the BetaSPN-type CS-alpha/beta domain. Disulfide bonds link Cys52–Cys72, Cys59–Cys77, and Cys63–Cys79.

The protein belongs to the long chain scorpion toxin family. Class 2 subfamily. Expressed by the venom gland.

The protein localises to the secreted. In terms of biological role, dual-function toxin that acts both as an insecticidal and an antimicrobial peptide. May inhibit voltage-gated potassium channels (Kv). This amphipathic peptide causes significant antimicrobial activity against E.coli (MIC=7 uM) but does not show any activity against S.aureus even at high concentration. In vivo, causes paralysis or death to crickets. In Liocheles australasiae (Dwarf wood scorpion), this protein is Peptide LaIT2.